We begin with the raw amino-acid sequence, 448 residues long: RING finger protein 44 (448 aa).

Residues 396–437 (CVVCFSDFESRQLLRVLPCNHEFHAKCVDKWLKTNRTCPICR) form an RING-type; atypical zinc finger.

This chain is RING finger protein 44 (rnf44), found in Danio rerio (Zebrafish).